A 1330-amino-acid polypeptide reads, in one-letter code: Nephrocystin-3 (1330 aa).

Gly2 carries N-myristoyl glycine lipidation. Residues 83–207 (ELEYAAAEYE…QRLQAQGIQV (125 aa)) adopt a coiled-coil conformation. TPR repeat units lie at residues 471 to 504 (IPEE…AHEL), 885 to 918 (CLLN…KSAM), 920 to 942 (TEYF…MSCL), 943 to 976 (ADLY…RETA), 985 to 1018 (AQSL…SENA), 1027 to 1060 (AREL…HQKA), 1093 to 1126 (ARTL…RERV), 1135 to 1168 (AQSL…RRRA), 1177 to 1210 (AYTV…RQKS), 1219 to 1252 (ATAL…YEDS), and 1261 to 1294 (GETL…KEAE). The interval 1296–1330 (SLLGGKAPSRHSSSGDTFSLKTAHSPNVFLQQGQR) is disordered. Residues 1305 to 1330 (RHSSSGDTFSLKTAHSPNVFLQQGQR) show a composition bias toward polar residues.

In terms of assembly, interacts with NPHP1 and INVS/NPHP2. Interacts (when myristoylated) with UNC119 and UNC119B; interaction is required for localization to cilium. Interacts with CEP164. Component of a complex containing at least ANKS6, INVS, NEK8 and NPHP3. ANKS6 may organize complex assembly by linking INVS and NPHP3 to NEK8 and INVS may target the complex to the proximal ciliary axoneme. In terms of tissue distribution, widely expressed at low level. Expressed in heart, placenta, liver, skeletal muscle, kidney and pancreas. Expressed at very low level in brain and lung.

It localises to the cell projection. The protein localises to the cilium. Its function is as follows. Required for normal ciliary development and function. Inhibits disheveled-1-induced canonical Wnt-signaling activity and may also play a role in the control of non-canonical Wnt signaling which regulates planar cell polarity. Probably acts as a molecular switch between different Wnt signaling pathways. Required for proper convergent extension cell movements. The sequence is that of Nephrocystin-3 (NPHP3) from Homo sapiens (Human).